Consider the following 173-residue polypeptide: Probable WRKY transcription factor 50 (173 aa).

The segment at residues 107-172 is a DNA-binding region (WRKY); it reads SEVEVLDDGF…YEGSHNHSSM (66 aa).

It belongs to the WRKY group II-c family.

The protein localises to the nucleus. Its function is as follows. Transcription factor. Interacts specifically with the W box (5'-(T)TGAC[CT]-3'), a frequently occurring elicitor-responsive cis-acting element. The chain is Probable WRKY transcription factor 50 (WRKY50) from Arabidopsis thaliana (Mouse-ear cress).